Here is a 174-residue protein sequence, read N- to C-terminus: Glutaredoxin-C5, chloroplastic (174 aa).

A chloroplast-targeting transit peptide spans methionine 1–methionine 51. Threonine 52 is modified (N-acetylthreonine). Position 90 is an S-glutathionyl cysteine; partial (cysteine 90). Cysteine 90 and cysteine 93 are disulfide-bonded. One can recognise a Glutaredoxin domain in the interval cysteine 93–asparagine 171. Glutathione-binding residues include valine 135, cysteine 148, and threonine 149. Cysteine 148 carries the post-translational modification S-glutathionyl cysteine; partial.

This sequence belongs to the glutaredoxin family. CPYC subfamily. As to quaternary structure, monomeric apoprotein and homodimeric holoprotein containing a [2Fe-2S] cluster. No in vitro interactions with SUFE1, BOLA1, BOLA2 or BOLA4. Glutathionylated.

The protein localises to the plastid. It is found in the chloroplast. Its function is as follows. Has a glutathione-disulfide oxidoreductase activity in the presence of NADPH and glutathione reductase. Reduces low molecular weight disulfides and proteins. Can assemble a [2Fe-2S] cluster, but cannot transfer it to an apoferredoxin. This is Glutaredoxin-C5, chloroplastic from Arabidopsis thaliana (Mouse-ear cress).